The primary structure comprises 366 residues: Chorismate synthase (366 aa).

NADP(+) contacts are provided by Arg-48 and Arg-54. FMN is bound by residues 132–134 (RSS), 244–245 (NA), Gly-289, 304–308 (KPTSS), and Arg-330.

Belongs to the chorismate synthase family. Homotetramer. FMNH2 serves as cofactor.

It carries out the reaction 5-O-(1-carboxyvinyl)-3-phosphoshikimate = chorismate + phosphate. Its pathway is metabolic intermediate biosynthesis; chorismate biosynthesis; chorismate from D-erythrose 4-phosphate and phosphoenolpyruvate: step 7/7. In terms of biological role, catalyzes the anti-1,4-elimination of the C-3 phosphate and the C-6 proR hydrogen from 5-enolpyruvylshikimate-3-phosphate (EPSP) to yield chorismate, which is the branch point compound that serves as the starting substrate for the three terminal pathways of aromatic amino acid biosynthesis. This reaction introduces a second double bond into the aromatic ring system. The chain is Chorismate synthase from Methylorubrum extorquens (strain PA1) (Methylobacterium extorquens).